Consider the following 320-residue polypeptide: Mitochondrial glycine transporter (320 aa).

3 Solcar repeats span residues 8–92 (SKTT…LRQG), 121–205 (LSNW…LKRR), and 223–307 (SSSS…LILR). Helical transmembrane passes span 14–39 (FAAG…TRVQ), 67–93 (GTLP…RQGL), 127–152 (LATG…VRYE), 180–203 (GFGA…EQLK), 227–253 (INFV…KTRL), and 282–300 (GLGL…AWTV).

It belongs to the mitochondrial carrier (TC 2.A.29) family. SLC25A38 subfamily.

Its subcellular location is the mitochondrion inner membrane. The catalysed reaction is glycine(in) = glycine(out). In terms of biological role, mitochondrial glycine transporter that imports glycine into the mitochondrial matrix. Plays an important role in providing glycine for the first enzymatic step in heme biosynthesis, the condensation of glycine with succinyl-CoA to produce 5-aminolevulinate (ALA) in the mitochondrial matrix. In Aspergillus fumigatus (strain CBS 144.89 / FGSC A1163 / CEA10) (Neosartorya fumigata), this protein is Mitochondrial glycine transporter.